A 402-amino-acid chain; its full sequence is Phosphoglycerate kinase (402 aa).

Substrate is bound by residues 24-26 (DFN), Arg40, 63-66 (HFGR), Arg122, and Arg155. Residues Lys206, Gly297, Glu328, and 357-360 (GGDS) contribute to the ATP site.

The protein belongs to the phosphoglycerate kinase family. In terms of assembly, monomer.

It localises to the cytoplasm. It catalyses the reaction (2R)-3-phosphoglycerate + ATP = (2R)-3-phospho-glyceroyl phosphate + ADP. Its pathway is carbohydrate degradation; glycolysis; pyruvate from D-glyceraldehyde 3-phosphate: step 2/5. In Parasynechococcus marenigrum (strain WH8102), this protein is Phosphoglycerate kinase.